We begin with the raw amino-acid sequence, 473 residues long: Mitochondrial distribution and morphology protein 10 (473 aa).

This sequence belongs to the MDM10 family. As to quaternary structure, component of the ER-mitochondria encounter structure (ERMES) or MDM complex, composed of MMM1, MDM10, MDM12 and MDM34. Associates with the mitochondrial outer membrane sorting assembly machinery SAM(core) complex.

Its subcellular location is the mitochondrion outer membrane. Functionally, component of the ERMES/MDM complex, which serves as a molecular tether to connect the endoplasmic reticulum and mitochondria. Components of this complex are involved in the control of mitochondrial shape and protein biogenesis and may function in phospholipid exchange. MDM10 is involved in the late assembly steps of the general translocase of the mitochondrial outer membrane (TOM complex). Functions in the TOM40-specific route of the assembly of outer membrane beta-barrel proteins, including the association of TOM40 with the receptor TOM22 and small TOM proteins. Can associate with the SAM(core) complex as well as the MDM12-MMM1 complex, both involved in late steps of the major beta-barrel assembly pathway, that is responsible for biogenesis of all outer membrane beta-barrel proteins. May act as a switch that shuttles between both complexes and channels precursor proteins into the TOM40-specific pathway. Plays a role in mitochondrial morphology and in the inheritance of mitochondria. This chain is Mitochondrial distribution and morphology protein 10, found in Candida albicans (strain SC5314 / ATCC MYA-2876) (Yeast).